Consider the following 245-residue polypeptide: Thiopurine S-methyltransferase (245 aa).

S14 is subject to Phosphoserine. 29 to 40 (WQDKWVNGKTAF) provides a ligand contact to S-adenosyl-L-methionine. F40 lines the substrate pocket. K58 bears the N6-acetyllysine mark. Residues L69, E90, 134-135 (SI), and R152 each bind S-adenosyl-L-methionine.

Belongs to the class I-like SAM-binding methyltransferase superfamily. TPMT family. As to quaternary structure, monomer.

The protein localises to the cytoplasm. It carries out the reaction S-adenosyl-L-methionine + a thiopurine = S-adenosyl-L-homocysteine + a thiopurine S-methylether.. The polypeptide is Thiopurine S-methyltransferase (TPMT) (Gorilla gorilla gorilla (Western lowland gorilla)).